A 1176-amino-acid chain; its full sequence is Growth-differentiation transition protein 5 (1176 aa).

The first 25 residues, 1-25 (MKNNFFKKTIILLIFLSIFILYSNA), serve as a signal peptide directing secretion. At 26 to 913 (DEETITTPPG…DVPANENTLN (888 aa)) the chain is on the extracellular side. The chain crosses the membrane as a helical span at residues 914–934 (LLTIVLPICSAVVVASSVMLG). Topologically, residues 935–1176 (RLFYKKKFKK…NVGYNVHEYF (242 aa)) are cytoplasmic. Composition is skewed to low complexity over residues 965-974 (SNIENKSESI) and 1053-1066 (PQIS…SIPS). Disordered regions lie at residues 965-985 (SNIE…EQKE) and 1050-1080 (VDTP…PPST). The segment covering 1067-1078 (SSPPPPPLPLPP) has biased composition (pro residues).

It belongs to the GDT family.

The protein resides in the membrane. The sequence is that of Growth-differentiation transition protein 5 (gdt5) from Dictyostelium discoideum (Social amoeba).